A 286-amino-acid chain; its full sequence is Cytosolic 5'-nucleotidase 3 (286 aa).

The active-site Nucleophile is the D38. Residues D38 and D40 each coordinate Mg(2+). Residue D40 is the Proton donor of the active site. Substrate-binding positions include E85, S106, 153 to 154, and K202; that span reads SA. Position 227 (D227) interacts with Mg(2+).

It belongs to the pyrimidine 5'-nucleotidase family.

The protein localises to the cytoplasm. It catalyses the reaction a ribonucleoside 5'-phosphate + H2O = a ribonucleoside + phosphate. In terms of biological role, can act both as nucleotidase and as phosphotransferase. The protein is Cytosolic 5'-nucleotidase 3 (nt5c3) of Danio rerio (Zebrafish).